The sequence spans 429 residues: Ribosomal RNA small subunit methyltransferase B (429 aa).

Residues 254 to 260, D277, D303, and D322 contribute to the S-adenosyl-L-methionine site; that span reads CAAPGGK. C375 acts as the Nucleophile in catalysis.

It belongs to the class I-like SAM-binding methyltransferase superfamily. RsmB/NOP family.

The protein resides in the cytoplasm. The enzyme catalyses cytidine(967) in 16S rRNA + S-adenosyl-L-methionine = 5-methylcytidine(967) in 16S rRNA + S-adenosyl-L-homocysteine + H(+). In terms of biological role, specifically methylates the cytosine at position 967 (m5C967) of 16S rRNA. The sequence is that of Ribosomal RNA small subunit methyltransferase B from Cronobacter sakazakii (strain ATCC BAA-894) (Enterobacter sakazakii).